Reading from the N-terminus, the 1032-residue chain is Exo-beta-D-glucosaminidase (1032 aa).

An N-terminal signal peptide occupies residues 1–32 (MSFRQKRTRIPLLAMTVTALAAAVCGVTTAPA). The propeptide occupies 33-46 (ATGAEVAVPLSVGA). D469 acts as the Proton donor in catalysis. The Nucleophile role is filled by E541. Positions 883–908 (SVRISGWNTGTQTVPADGSGPGPSDP) are disordered. The CBM6 domain maps to 909 to 1032 (VDYQAEDATI…GGPNVDKITL (124 aa)).

The protein belongs to the glycosyl hydrolase 2 family. Monomer.

The protein localises to the secreted. The catalysed reaction is Hydrolysis of chitosan or chitosan oligosaccharides to remove successive D-glucosamine residues from the non-reducing termini.. Hydrolyzes chitosan and chitooligosaccharides with retention of anomeric configuration. Has maximum activity on chitotetraose, chitopentaose and their corresponding alcohols, with a slight decrease in the rate of hydrolysis on longer chains. Has no activity against beta-D-glucopyranoside, beta-D-xylopyranoside, beta-D-mannoside, beta-D-glucuronide, beta-D-galactoside, beta-D-N-acetylgalactosamide, beta-D-N-acetylglucosaminide and alpha-D-N-acetylglucosaminide. The protein is Exo-beta-D-glucosaminidase of Amycolatopsis orientalis (Nocardia orientalis).